A 567-amino-acid chain; its full sequence is Low-affinity glucose transporter HXT3 (567 aa).

The segment covering 1–29 has biased composition (polar residues); sequence MNSTPDLISPQKSSENSNADLPSNSSQVM. The tract at residues 1 to 30 is disordered; it reads MNSTPDLISPQKSSENSNADLPSNSSQVMN. Topologically, residues 1-57 are cytoplasmic; sequence MNSTPDLISPQKSSENSNADLPSNSSQVMNMPEEKGVQDDFQAEADQVLTNPNTGKG. S23 carries the post-translational modification Phosphoserine. Residues 58–78 form a helical membrane-spanning segment; that stretch reads AYVTVSICCVMVAFGGFVFGW. At 79–113 the chain is on the extracellular side; the sequence is DTGTISGFVAQTDFLRRFGMKHKDGSYYLSKVRTG. The helical transmembrane segment at 114–134 threads the bilayer; sequence LIVSIFNIGCAIGGIILAKLG. The Cytoplasmic portion of the chain corresponds to 135–140; it reads DMYGRK. Residues 141-161 traverse the membrane as a helical segment; it reads MGLIVVVVIYIIGIIIQIASI. At 162-171 the chain is on the extracellular side; the sequence is NKWYQYFIGR. A helical transmembrane segment spans residues 172-192; sequence IISGLGVGGIAVLSPMLISEV. Over 193-198 the chain is Cytoplasmic; that stretch reads APKEMR. The chain crosses the membrane as a helical span at residues 199–219; sequence GTLVSCYQLMITLGIFLGYCT. Topologically, residues 220-233 are extracellular; the sequence is NFGTKNYSNSVQWR. N225 carries N-linked (GlcNAc...) asparagine glycosylation. A helical membrane pass occupies residues 234–254; it reads VPLGLCFAWALFMIGGMTFVP. The Cytoplasmic portion of the chain corresponds to 255–337; the sequence is ESPRYLVEAG…IQSLQQLTGD (83 aa). A helical membrane pass occupies residues 338–354; sequence NYFFYYGTTVFNAVGMS. At 355–360 the chain is on the extracellular side; that stretch reads DSFETS. A helical transmembrane segment spans residues 361–378; sequence IVFGVVNFFSTCCSLYTV. At 379-385 the chain is on the cytoplasmic side; that stretch reads DRFGRRN. The helical transmembrane segment at 386–406 threads the bilayer; the sequence is CLLYGAIGMVCCYVVYASVGV. Topologically, residues 407–428 are extracellular; sequence TRLWPNGEGNGSSKGAGNCMIV. N416 carries an N-linked (GlcNAc...) asparagine glycan. Residues 429 to 449 traverse the membrane as a helical segment; it reads FACFYIFCFATTWAPIAYVVI. Residues 450–466 lie on the Cytoplasmic side of the membrane; sequence SETFPLRVKSKAMSIAT. The helical transmembrane segment at 467 to 487 threads the bilayer; sequence AANWLWGFLIGFFTPFITGAI. A topological domain (extracellular) is located at residue N488. The helical transmembrane segment at 489–509 threads the bilayer; that stretch reads FYYGYVFMGCMVFAYFYVFFF. At 510-567 the chain is on the cytoplasmic side; it reads VPETKGLTLEEVNDMYAEGVLPWKSASWVPTSQRGANYDADALMHDDQPFYKKMFGKK.

This sequence belongs to the major facilitator superfamily. Sugar transporter (TC 2.A.1.1) family.

It localises to the membrane. Its function is as follows. Low-affinity glucose transporter. The chain is Low-affinity glucose transporter HXT3 (HXT3) from Saccharomyces cerevisiae (strain ATCC 204508 / S288c) (Baker's yeast).